The primary structure comprises 814 residues: Microbial collagenase (814 aa).

An N-terminal signal peptide occupies residues 1–21 (MELKILSVAIATTLTSTGVFA). Positions 22–75 (LSEPVSQVTEQHAHSAHTHGVEFNRVEYQPTATLPIQPSKATRVQSLESLDESS) are excised as a propeptide. His477 is a binding site for Zn(2+). Residue Glu478 is part of the active site. Residue His481 participates in Zn(2+) binding. The 89-residue stretch at 609-697 (APNAVITANS…VVISALGGND (89 aa)) folds into the PKD domain.

Belongs to the peptidase M9A family. Zn(2+) is required as a cofactor. Post-translationally, proteolytic cleavage might yield three different active forms.

Its subcellular location is the secreted. The catalysed reaction is Digestion of native collagen in the triple helical region at Xaa-|-Gly bonds. With synthetic peptides, a preference is shown for Gly at P3 and P1', Pro and Ala at P2 and P2', and hydroxyproline, Ala or Arg at P3'.. The polypeptide is Microbial collagenase (Vibrio alginolyticus).